The following is a 235-amino-acid chain: SMN complex subunit yip11/gem2 (235 aa).

Residues 1-34 form a disordered region; that stretch reads MPSKRKRNPLQYQTSGSLDEETNQRSAFPQIDNN. Residues 24-34 show a composition bias toward polar residues; it reads QRSAFPQIDNN. A phosphoserine mark is found at Ser-117 and Ser-118.

The protein belongs to the gemin-2 family. In terms of assembly, part of the core SMN complex at least composed of smn1, yip11/gem2, gem6, gem7 and gem8. Interacts with smn1; the interaction is direct.

The protein resides in the nucleus. Functionally, the SMN complex catalyzes the assembly of small nuclear ribonucleoproteins (snRNPs), the building blocks of the spliceosome, and thereby plays an important role in the splicing of cellular pre-mRNAs. Most spliceosomal snRNPs contain a common set of Sm proteins smb1, smd1, smd2, smd3, sme1, smf1 and smg1 that assemble in a heptameric protein ring on the Sm site of the small nuclear RNA to form the core snRNP. In the cytosol, the Sm proteins smd1, smd2, sme1, smf1 and smg1 (5Sm) are trapped in an inactive 6S pICln-Sm complex by the chaperone saf5. To complete assembly of core snRNPs, the SMN complex accepts 5Sm from saf5. Binding of snRNA inside 5Sm ultimately triggers eviction of the SMN complex, thereby allowing binding of smd3 and smb1 to complete assembly of the core snRNP. Within the SMN complex, yip11/gem2 constrains the conformation of 5Sm, thereby promoting 5Sm binding to snRNA containing the snRNP code (a nonameric Sm site and a 3'-adjacent stem-loop), thus preventing progression of assembly until a cognate substrate is bound. The protein is SMN complex subunit yip11/gem2 (yip11) of Schizosaccharomyces pombe (strain 972 / ATCC 24843) (Fission yeast).